A 618-amino-acid polypeptide reads, in one-letter code: Dihydroxy-acid dehydratase (618 aa).

D81 contributes to the Mg(2+) binding site. C122 contacts [2Fe-2S] cluster. 2 residues coordinate Mg(2+): D123 and K124. N6-carboxylysine is present on K124. Residue C199 participates in [2Fe-2S] cluster binding. E495 is a binding site for Mg(2+). Residue S521 is the Proton acceptor of the active site.

Belongs to the IlvD/Edd family. In terms of assembly, homodimer. [2Fe-2S] cluster serves as cofactor. Requires Mg(2+) as cofactor.

The catalysed reaction is (2R)-2,3-dihydroxy-3-methylbutanoate = 3-methyl-2-oxobutanoate + H2O. The enzyme catalyses (2R,3R)-2,3-dihydroxy-3-methylpentanoate = (S)-3-methyl-2-oxopentanoate + H2O. It functions in the pathway amino-acid biosynthesis; L-isoleucine biosynthesis; L-isoleucine from 2-oxobutanoate: step 3/4. The protein operates within amino-acid biosynthesis; L-valine biosynthesis; L-valine from pyruvate: step 3/4. In terms of biological role, functions in the biosynthesis of branched-chain amino acids. Catalyzes the dehydration of (2R,3R)-2,3-dihydroxy-3-methylpentanoate (2,3-dihydroxy-3-methylvalerate) into 2-oxo-3-methylpentanoate (2-oxo-3-methylvalerate) and of (2R)-2,3-dihydroxy-3-methylbutanoate (2,3-dihydroxyisovalerate) into 2-oxo-3-methylbutanoate (2-oxoisovalerate), the penultimate precursor to L-isoleucine and L-valine, respectively. The polypeptide is Dihydroxy-acid dehydratase (Blochmanniella floridana).